The chain runs to 559 residues: Cytoplasmic polyadenylation element-binding protein 1 (559 aa).

The disordered stretch occupies residues 223 to 244 (RLDHSSSPLTPPPSATSSGGLS). RRM domains lie at 304–401 (CKVF…DAQV) and 423–504 (NTVF…PYLE). Cys-508, Cys-511, Cys-520, Cys-525, Cys-530, Cys-533, His-538, and His-546 together coordinate Zn(2+).

This sequence belongs to the RRM CPEB family. Interacts with kinesin, dynein, APLP1, APLP2, TENT2/GLD2 and APP. Both phosphorylated and non phosphorylated forms interact with APLP1. Interacts with TENT4B; the interaction is required for TENT4B-mediated translational control.

The protein resides in the cytoplasm. Sequence-specific RNA-binding protein that regulates mRNA cytoplasmic polyadenylation and translation initiation during oocyte maturation and early development. Binds to the cytoplasmic polyadenylation element (CPE), an uridine-rich sequence element (consensus sequence 5'-UUUUUAU-3') within the mRNA 3'-UTR. The chain is Cytoplasmic polyadenylation element-binding protein 1 (cpeb1) from Carassius auratus (Goldfish).